A 278-amino-acid chain; its full sequence is HTH-type transcriptional activator RhaS (278 aa).

The region spanning 174–272 (NLLLAWLEDH…NWSPRDIRQG (99 aa)) is the HTH araC/xylS-type domain. 2 DNA-binding regions (H-T-H motif) span residues 191–212 (DAVADQFSLSLRTLHRQLKQQT) and 239–262 (VTDIAYRCGFSDSNHFSTLFRREF).

In terms of assembly, binds DNA as a dimer.

The protein localises to the cytoplasm. In terms of biological role, activates expression of the rhaBAD and rhaT operons. The polypeptide is HTH-type transcriptional activator RhaS (Escherichia coli O6:H1 (strain CFT073 / ATCC 700928 / UPEC)).